The primary structure comprises 182 residues: ATP synthase subunit delta (182 aa).

This sequence belongs to the ATPase delta chain family. As to quaternary structure, F-type ATPases have 2 components, F(1) - the catalytic core - and F(0) - the membrane proton channel. F(1) has five subunits: alpha(3), beta(3), gamma(1), delta(1), epsilon(1). CF(0) has four main subunits: a(1), b(1), b'(1) and c(10-14). The alpha and beta chains form an alternating ring which encloses part of the gamma chain. F(1) is attached to F(0) by a central stalk formed by the gamma and epsilon chains, while a peripheral stalk is formed by the delta, b and b' chains.

The protein resides in the cellular thylakoid membrane. F(1)F(0) ATP synthase produces ATP from ADP in the presence of a proton or sodium gradient. F-type ATPases consist of two structural domains, F(1) containing the extramembraneous catalytic core and F(0) containing the membrane proton channel, linked together by a central stalk and a peripheral stalk. During catalysis, ATP synthesis in the catalytic domain of F(1) is coupled via a rotary mechanism of the central stalk subunits to proton translocation. Its function is as follows. This protein is part of the stalk that links CF(0) to CF(1). It either transmits conformational changes from CF(0) to CF(1) or is implicated in proton conduction. The sequence is that of ATP synthase subunit delta from Synechococcus sp. (strain WH7803).